Consider the following 245-residue polypeptide: 1-(5-phosphoribosyl)-5-[(5-phosphoribosylamino)methylideneamino] imidazole-4-carboxamide isomerase (245 aa).

D7 acts as the Proton acceptor in catalysis. Catalysis depends on D129, which acts as the Proton donor.

It belongs to the HisA/HisF family.

It is found in the cytoplasm. It carries out the reaction 1-(5-phospho-beta-D-ribosyl)-5-[(5-phospho-beta-D-ribosylamino)methylideneamino]imidazole-4-carboxamide = 5-[(5-phospho-1-deoxy-D-ribulos-1-ylimino)methylamino]-1-(5-phospho-beta-D-ribosyl)imidazole-4-carboxamide. It participates in amino-acid biosynthesis; L-histidine biosynthesis; L-histidine from 5-phospho-alpha-D-ribose 1-diphosphate: step 4/9. The sequence is that of 1-(5-phosphoribosyl)-5-[(5-phosphoribosylamino)methylideneamino] imidazole-4-carboxamide isomerase from Shewanella piezotolerans (strain WP3 / JCM 13877).